Consider the following 149-residue polypeptide: Large ribosomal subunit protein uL11 (149 aa).

Belongs to the universal ribosomal protein uL11 family. In terms of assembly, part of the ribosomal stalk of the 50S ribosomal subunit. Interacts with L10 and the large rRNA to form the base of the stalk. L10 forms an elongated spine to which L12 dimers bind in a sequential fashion forming a multimeric L10(L12)X complex. In terms of processing, one or more lysine residues are methylated.

Forms part of the ribosomal stalk which helps the ribosome interact with GTP-bound translation factors. The protein is Large ribosomal subunit protein uL11 of Methylorubrum extorquens (strain CM4 / NCIMB 13688) (Methylobacterium extorquens).